Consider the following 152-residue polypeptide: SsrA-binding protein (152 aa).

Over residues 132 to 142 (REAIKKRDVSD) the composition is skewed to basic and acidic residues. The tract at residues 132–152 (REAIKKRDVSDQIRSSLRRSR) is disordered.

This sequence belongs to the SmpB family.

Its subcellular location is the cytoplasm. In terms of biological role, required for rescue of stalled ribosomes mediated by trans-translation. Binds to transfer-messenger RNA (tmRNA), required for stable association of tmRNA with ribosomes. tmRNA and SmpB together mimic tRNA shape, replacing the anticodon stem-loop with SmpB. tmRNA is encoded by the ssrA gene; the 2 termini fold to resemble tRNA(Ala) and it encodes a 'tag peptide', a short internal open reading frame. During trans-translation Ala-aminoacylated tmRNA acts like a tRNA, entering the A-site of stalled ribosomes, displacing the stalled mRNA. The ribosome then switches to translate the ORF on the tmRNA; the nascent peptide is terminated with the 'tag peptide' encoded by the tmRNA and targeted for degradation. The ribosome is freed to recommence translation, which seems to be the essential function of trans-translation. The protein is SsrA-binding protein of Bdellovibrio bacteriovorus (strain ATCC 15356 / DSM 50701 / NCIMB 9529 / HD100).